We begin with the raw amino-acid sequence, 872 residues long: Alanine--tRNA ligase (872 aa).

Zn(2+) is bound by residues H567, H571, C669, and H673.

This sequence belongs to the class-II aminoacyl-tRNA synthetase family. Zn(2+) serves as cofactor.

The protein resides in the cytoplasm. The enzyme catalyses tRNA(Ala) + L-alanine + ATP = L-alanyl-tRNA(Ala) + AMP + diphosphate. Functionally, catalyzes the attachment of alanine to tRNA(Ala) in a two-step reaction: alanine is first activated by ATP to form Ala-AMP and then transferred to the acceptor end of tRNA(Ala). Also edits incorrectly charged Ser-tRNA(Ala) and Gly-tRNA(Ala) via its editing domain. The polypeptide is Alanine--tRNA ligase (Streptococcus pyogenes serotype M12 (strain MGAS2096)).